We begin with the raw amino-acid sequence, 32 residues long: Beta-hexosaminidase (32 aa).

The GH18 domain occupies 1-32 (GKSSSRPLGDATLGDLDFDIEVTQDYWDDLAR). Catalysis depends on Glu21, which acts as the Proton donor.

The protein belongs to the glycosyl hydrolase 18 family. Chitinase class II subfamily.

It carries out the reaction Hydrolysis of terminal non-reducing N-acetyl-D-hexosamine residues in N-acetyl-beta-D-hexosaminides.. Its activity is regulated as follows. Activity is decreased by HgCl(2) and maltose. Activity is stimulated by Na(2)SeO(4), BaCl(2), MgCl(2), chondroitin 6-sulfate and phenylmethylsulfonyl fluoride. Its function is as follows. Preferentially hydrolyzes pNP-GlcNAc, hydrolyzes pNP-GalNAc to a lesser extent. The chain is Beta-hexosaminidase from Palythoa caribaeorum (White encrusting zoanthid coral).